Here is a 101-residue protein sequence, read N- to C-terminus: Small ribosomal subunit protein uS14 (101 aa).

Basic and acidic residues predominate over residues 1–10; that stretch reads MAKKSSIEKN. Positions 1-23 are disordered; it reads MAKKSSIEKNNRRRRMNRNAAAK. Basic residues predominate over residues 11-23; sequence NRRRRMNRNAAAK.

It belongs to the universal ribosomal protein uS14 family. As to quaternary structure, part of the 30S ribosomal subunit. Contacts proteins S3 and S10.

Functionally, binds 16S rRNA, required for the assembly of 30S particles and may also be responsible for determining the conformation of the 16S rRNA at the A site. This chain is Small ribosomal subunit protein uS14, found in Nitrobacter winogradskyi (strain ATCC 25391 / DSM 10237 / CIP 104748 / NCIMB 11846 / Nb-255).